The primary structure comprises 160 residues: Cytochrome b6-f complex subunit 4 (160 aa).

3 consecutive transmembrane segments (helical) span residues 36–56 (LLYI…GLAV), 95–115 (LLGV…PFIE), and 131–151 (ILFL…TFPI).

It belongs to the cytochrome b family. PetD subfamily. The 4 large subunits of the cytochrome b6-f complex are cytochrome b6, subunit IV (17 kDa polypeptide, petD), cytochrome f and the Rieske protein, while the 4 small subunits are petG, petL, petM and petN. The complex functions as a dimer.

It localises to the plastid. The protein resides in the chloroplast thylakoid membrane. Functionally, component of the cytochrome b6-f complex, which mediates electron transfer between photosystem II (PSII) and photosystem I (PSI), cyclic electron flow around PSI, and state transitions. The sequence is that of Cytochrome b6-f complex subunit 4 from Chlamydomonas moewusii (Chlamydomonas eugametos).